The chain runs to 504 residues: Maturase K (504 aa).

This sequence belongs to the intron maturase 2 family. MatK subfamily.

It localises to the plastid. It is found in the chloroplast. Usually encoded in the trnK tRNA gene intron. Probably assists in splicing its own and other chloroplast group II introns. The sequence is that of Maturase K from Quercus petraea (Durmast oak).